A 33-amino-acid polypeptide reads, in one-letter code: Cytochrome b6-f complex subunit 6 (33 aa).

The chain crosses the membrane as a helical span at residues Ile-4 to Phe-24.

This sequence belongs to the PetL family. As to quaternary structure, the 4 large subunits of the cytochrome b6-f complex are cytochrome b6, subunit IV (17 kDa polypeptide, PetD), cytochrome f and the Rieske protein, while the 4 small subunits are PetG, PetL, PetM and PetN. The complex functions as a dimer.

The protein localises to the plastid. Its subcellular location is the chloroplast thylakoid membrane. Component of the cytochrome b6-f complex, which mediates electron transfer between photosystem II (PSII) and photosystem I (PSI), cyclic electron flow around PSI, and state transitions. PetL is important for photoautotrophic growth as well as for electron transfer efficiency and stability of the cytochrome b6-f complex. The polypeptide is Cytochrome b6-f complex subunit 6 (Pinus thunbergii (Japanese black pine)).